The following is a 297-amino-acid chain: Succinate dehydrogenase [ubiquinone] iron-sulfur subunit, mitochondrial (297 aa).

The 2Fe-2S ferredoxin-type domain occupies 47-140; that stretch reads KKFEIYRWNP…SLKVYPLPHM (94 aa). 4 residues coordinate [2Fe-2S] cluster: cysteine 100, cysteine 105, cysteine 108, and cysteine 120. The 4Fe-4S ferredoxin-type domain maps to 185–215; the sequence is DRSKLDGLYECILCACCSTSCPSYWWNAEKY. [4Fe-4S] cluster is bound by residues cysteine 195, cysteine 198, and cysteine 201. Residue cysteine 205 coordinates [3Fe-4S] cluster. Residue tryptophan 210 coordinates a ubiquinone. [3Fe-4S] cluster-binding residues include cysteine 252 and cysteine 258. Cysteine 262 is a binding site for [4Fe-4S] cluster.

It belongs to the succinate dehydrogenase/fumarate reductase iron-sulfur protein family. As to quaternary structure, component of complex II composed of four subunits: a flavoprotein (FP), an iron-sulfur protein (IP), and a cytochrome b composed of a large and a small subunit. Requires [2Fe-2S] cluster as cofactor. The cofactor is [3Fe-4S] cluster. [4Fe-4S] cluster serves as cofactor. In terms of tissue distribution, most abundant in the adult thorax and low in abdominal tissues.

It is found in the mitochondrion inner membrane. The catalysed reaction is a quinone + succinate = fumarate + a quinol. Its pathway is carbohydrate metabolism; tricarboxylic acid cycle; fumarate from succinate (eukaryal route): step 1/1. In terms of biological role, iron-sulfur protein (IP) subunit of succinate dehydrogenase (SDH) that is involved in complex II of the mitochondrial electron transport chain and is responsible for transferring electrons from succinate to ubiquinone (coenzyme Q). This chain is Succinate dehydrogenase [ubiquinone] iron-sulfur subunit, mitochondrial (SdhB), found in Drosophila melanogaster (Fruit fly).